A 474-amino-acid chain; its full sequence is Aspartic-type endopeptidase ctsD (474 aa).

Positions 1 to 19 (MHLLQCLLSTISLASTVTA) are cleaved as a signal peptide. The Peptidase A1 domain occupies 106–413 (YFATVRVGSQ…DYDNHRIGFA (308 aa)). D124 is an active-site residue. N-linked (GlcNAc...) asparagine glycosylation is found at N189, N197, N275, and N301. D307 is a catalytic residue. 3 N-linked (GlcNAc...) asparagine glycosylation sites follow: N338, N344, and N414. A lipid anchor (GPI-anchor amidated serine) is attached at S452. Residues 453-474 (ASIVSRFVHWPFIFALLCMVLV) constitute a propeptide, removed in mature form.

Belongs to the peptidase A1 family.

It is found in the cell membrane. In terms of biological role, secreted aspartic-type endopeptidase which is secreted and contributes to virulence. This is Aspartic-type endopeptidase ctsD (ctsD) from Aspergillus fumigatus (strain ATCC MYA-4609 / CBS 101355 / FGSC A1100 / Af293) (Neosartorya fumigata).